Reading from the N-terminus, the 467-residue chain is Variant surface glycoprotein 7 (467 aa).

Polar residues predominate over residues 77-87 (TIAAGATNTKL). The interval 77 to 133 (TIAAGATNTKLSGHHPNQGRRGRRRSSSARPNNSKGNSPSKRAGGAVRGETPASGRL) is disordered. A compositionally biased stretch (basic residues) spans 93–103 (NQGRRGRRRSS). Residues 107 to 116 (PNNSKGNSPS) show a composition bias toward polar residues. N-linked (GlcNAc...) asparagine glycosylation is found at asparagine 108 and asparagine 252. The interval 382–407 (AEKVENPRSQGNPETAENKKEGGNTA) is disordered. An N-linked (GlcNAc...) asparagine glycan is attached at asparagine 416. The GPI-anchor amidated aspartate moiety is linked to residue aspartate 444. Positions 445–467 (SSFLLSKQFALSVVSAAFAALLF) are cleaved as a propeptide — removed in mature form.

The protein localises to the cell membrane. VSG forms a coat on the surface of the parasite. The trypanosome evades the immune response of the host by expressing a series of antigenically distinct VSGs from an estimated 1000 VSG genes. This Trypanosoma brucei rhodesiense protein is Variant surface glycoprotein 7.